Consider the following 166-residue polypeptide: Sperm-egg fusion protein TMEM95 (166 aa).

The N-terminal stretch at 1–16 (MWTLALGGIFLAAVEA) is a signal peptide. 4 disulfides stabilise this stretch: cysteine 17–cysteine 118, cysteine 20–cysteine 121, cysteine 105–cysteine 128, and cysteine 109–cysteine 134. The Extracellular segment spans residues 17 to 145 (CVFCRFPDRE…PGSHDLWEAR (129 aa)). Asparagine 117 carries N-linked (GlcNAc...) asparagine glycosylation. A helical transmembrane segment spans residues 146–165 (ILLLFVCGTALLLGVPSLAV). Position 166 (glutamate 166) is a topological domain, cytoplasmic.

This sequence belongs to the TMEM95 family. In terms of assembly, does not interact with sperm-egg fusion proteins IZUMO1 or IZUMO1R/JUNO. Post-translationally, N-glycosylated. In terms of tissue distribution, detected in testis and brain with higher levels in brain than testis.

It localises to the cytoplasmic vesicle. The protein localises to the secretory vesicle. Its subcellular location is the acrosome membrane. Its function is as follows. Sperm protein required for fusion of sperm with the egg membrane during fertilization. This Bos taurus (Bovine) protein is Sperm-egg fusion protein TMEM95.